We begin with the raw amino-acid sequence, 495 residues long: Beta-galactoside alpha-2,6-sialyltransferase 2 (495 aa).

Residues 1 to 10 lie on the Cytoplasmic side of the membrane; sequence MKPHLKQWRQ. The helical; Signal-anchor for type II membrane protein transmembrane segment at 11 to 31 threads the bilayer; the sequence is GMLCGVFAWGLFFVVIFLYFT. Residues 32–495 lie on the Lumenal side of the membrane; the sequence is DSSPAKPAPS…LQAVRCPPGA (464 aa). 2 disordered regions span residues 63 to 90 and 107 to 165; these read GASE…LRTW and GRTS…EDGE. Low complexity predominate over residues 134–143; the sequence is PEGARPPRAA. The span at 144-153 shows a compositional bias: basic residues; sequence PGRRAKRGPR. 3 disulfides stabilise this stretch: Cys225–Cys491, Cys268–Cys420, and Cys438–Cys449. N-linked (GlcNAc...) asparagine glycosylation is found at Asn279 and Asn309.

It belongs to the glycosyltransferase 29 family.

It localises to the golgi apparatus. The protein localises to the golgi stack membrane. It carries out the reaction a beta-D-galactoside + CMP-N-acetyl-beta-neuraminate = an N-acetyl-alpha-neuraminyl-(2-&gt;6)-beta-D-galactosyl derivative + CMP + H(+). In terms of biological role, transfers sialic acid from the donor of substrate CMP-sialic acid to galactose containing acceptor substrates. Has alpha-2,6-sialyltransferase activity toward oligosaccharides that have the Gal-beta-1,4-GlcNAc sequence at the non-reducing end of their carbohydrate groups, but it has weak or no activities toward glycoproteins and glycolipids. The polypeptide is Beta-galactoside alpha-2,6-sialyltransferase 2 (ST6GAL2) (Bos taurus (Bovine)).